A 516-amino-acid polypeptide reads, in one-letter code: MNQPTSSNNGAIKGVQKIRTLIEGLDEISHGGLPSGRTTLVSGTSGTGKTLLAIQFLYHGIKHFDYPGLFVTFEESPRDIIQNAHSFGWDLQSLVDEGKLFILDASPDPDGQEVVGNFDLSALIERIQYAIRKYNAKLVSIDSVTAVFQQYDAAPVVRREIFRLVARLKHLAVTSIMTTERLDEYGPVARFGVEEFVSDNVVILRNVLEGERRRRTIEILKLRGTTHMKGEYPFTITNDGINIFPLGAMRLTQRSSNARISSGVETLDKMCGGGFFKDSIILATGATGTGKTLLVSKFLEEGCRRGERAILFAYEESRAQLSRNASSWGIDFEEMERKGLLKLLCSYPESAGLEDHLQMIKSEISEFKPSRIAIDSLSALARGVTNNAFRQFVIGVTGYAKQEEITGFFTNTTDQFMGAHSITESHISTITDTILMLQYVEIRGEMSRAINVFKMRGSWHDKGIREYTISEGGAAIKDSFRNYERIISGSPTRIAVDEKSELSRIMRGVQDKTLPE.

2 consecutive KaiC domains span residues 1-244 (MNQP…INIF) and 258-516 (ARIS…TLPE). Residues Gly-46, Thr-47, Gly-48, Lys-49, Thr-50, Leu-51, Ser-86, Lys-221, Leu-222, Arg-223, Thr-225, His-227, Thr-237, Thr-287, Gly-288, Thr-289, Gly-290, Lys-291, Thr-292, and Leu-293 each coordinate ATP. Thr-50 contacts Mg(2+). Thr-292 serves as a coordination point for Mg(2+). Position 315 (Glu-315) interacts with Mg(2+). Trp-328 is an ATP binding site. At Ser-428 the chain carries Phosphoserine; by autocatalysis. Thr-429 is modified (phosphothreonine; by autocatalysis). Arg-448, Lys-454, Met-455, Arg-456, Ser-458, His-460, and Lys-462 together coordinate ATP.

Belongs to the KaiC family. In terms of assembly, homohexamer; hexamerization is dependent on ATP-binding. The KaiABC complex composition changes during the circadian cycle to control KaiC phosphorylation. Complexes KaiC(6), KaiA(2-4):KaiC(6), KaiB(6):KaiC(6) and KaiC(6):KaiB(6):KaiA(12) are among the most important forms, many form cooperatively. KaiC interacts with SasA, activating its autokinase function and leading to RpaA activation. The cofactor is Mg(2+). Post-translationally, phosphorylated on serine and threonine residues by autocatalysis. Has a 4 step phosphorylation cycle; the autokinase acts first on Thr-429, then Ser-428. When Ser-428 is modified KaiC switches to an autophosphatase mode, acting first on phospho-Thr-429 then phospho-Ser-428.

The catalysed reaction is L-seryl-[protein] + ATP = O-phospho-L-seryl-[protein] + ADP + H(+). The enzyme catalyses L-threonyl-[protein] + ATP = O-phospho-L-threonyl-[protein] + ADP + H(+). It catalyses the reaction ATP + H2O = ADP + phosphate + H(+). The interaction with KaiA enhances its phosphorylation status, while the interaction with KaiB decreases it. Central component of the KaiABC oscillator complex, which constitutes the main circadian regulator in cyanobacteria. Complex composition changes during the circadian cycle to control KaiC phosphorylation. KaiA stimulates KaiC autophosphorylation, while KaiB sequesters KaiA, leading to KaiC autodephosphorylation. Clock output pathways impact the RpaA transcriptional regulator. KaiC enhances the autophosphorylation activity of SasA, which then transfers its phosphate group to RpaA to activate it. KaiB and KaiC together enhance the phospho-RpaA dephosphatase activity of CikA. Functionally, has a weak, temperature-independent ATPase activity; ATPase activity defines the circadian period. The phosphorylation state of KaiC modulates its ATPase activity and effects KaiB binding. The polypeptide is Circadian clock oscillator protein KaiC (Picosynechococcus sp. (strain ATCC 27264 / PCC 7002 / PR-6) (Agmenellum quadruplicatum)).